The following is an 82-amino-acid chain: Putative ribonuclease VapC34 (82 aa).

Residue D4 coordinates Mg(2+).

This sequence belongs to the PINc/VapC protein family. Requires Mg(2+) as cofactor.

Its function is as follows. Toxic component of a possible type II toxin-antitoxin (TA) system. A putative RNase. Its cognate antitoxin is VapB34. This Mycobacterium tuberculosis (strain CDC 1551 / Oshkosh) protein is Putative ribonuclease VapC34 (vapC34).